A 111-amino-acid chain; its full sequence is TPR repeat-containing protein associated with Hsp90 (111 aa).

Ser2 is subject to N-acetylserine. 2 TPR repeats span residues 4–37 (FEKQ…QPQN) and 39–71 (VGYS…TSTA).

Component of the R2TP complex composed at least of RVB1, RVB2, TAH1 and PIH1. Also interacts with HSP90.

It localises to the cytoplasm. The protein resides in the nucleus. This Saccharomyces cerevisiae (strain ATCC 204508 / S288c) (Baker's yeast) protein is TPR repeat-containing protein associated with Hsp90 (TAH1).